The chain runs to 522 residues: N-acetylgalactosamine-6-sulfatase (522 aa).

Residues 1–26 (MAAVVAATRWWQLLLVLSAAGMGASG) form the signal peptide. Positions 27 to 379 (APQPPNILLL…PTLLQGRLMD (353 aa)) are catalytic domain. Ca(2+) is bound by residues Asp-39, Asp-40, and Cys-79. The active-site Nucleophile is the Cys-79. Cys-79 carries the post-translational modification 3-oxoalanine (Cys). His-142 is an active-site residue. Asn-204 carries an N-linked (GlcNAc...) asparagine glycan. Positions 288 and 289 each coordinate Ca(2+). An intrachain disulfide couples Cys-308 to Cys-419. Asn-423 carries N-linked (GlcNAc...) asparagine glycosylation. Disulfide bonds link Cys-489-Cys-518 and Cys-501-Cys-507.

It belongs to the sulfatase family. Homodimer. The cofactor is Ca(2+). In terms of processing, the conversion to 3-oxoalanine (also known as C-formylglycine, FGly), of a serine or cysteine residue in prokaryotes and of a cysteine residue in eukaryotes, is critical for catalytic activity.

Its subcellular location is the lysosome. It carries out the reaction Hydrolysis of the 6-sulfate groups of the N-acetyl-D-galactosamine 6-sulfate units of chondroitin sulfate and of the D-galactose 6-sulfate units of keratan sulfate.. The chain is N-acetylgalactosamine-6-sulfatase (GALNS) from Homo sapiens (Human).